The sequence spans 558 residues: MRSSLFKSGLEKAPHRSLLYALGLTKEEMRRPLIGVVNSANEVVPGHIHLNTIAEAVKAGIRLAGGTPMTFPVIGVCDGLAMNHAGMHFSLVSREIIADSIEIMASAHPFDALVCIPNCDKVVPGMLMAMLRLNIPAVIVSGGPMLAGTTSEGSFDLIDVFEAVGKFKRGAINEDQLEELEENACPGCGSCSGMFTANSMNCLSESVGLGLPGNGTIPAVSAKRVRLAKTAGMRVMDLLEKNIRPRDIVTAKSIENAVTMDMALGCSTNTVLHLPAVFAEAGLPLTLDIFDAVSRKTPNLCKLSPAGKHYLDDLERAGGIPAVMSELAKRGLLHLDVMTATGKTLGENLTDLKARVKNFDVIRAKEPYANEGGIAILRGSLAPDGAVVKQSAVAPAMMRHTGPARVFDSEEAANKAILGGEIKAGDVVVIRYEGPQGGPGMREMLSPTSNIMGMGLGETVALITDGRFSGGTRGAAIGHVSPEAAEGGPIALIRDGDRIEVDIPGRKLDVLVDAAELEARRASVVAPEKVIESPLLRRYASLVKSAAQGAVYKDPAAK.

A Mg(2+)-binding site is contributed by Asp78. Position 119 (Cys119) interacts with [2Fe-2S] cluster. Mg(2+) contacts are provided by Asp120 and Lys121. Residue Lys121 is modified to N6-carboxylysine. Cys191 contributes to the [2Fe-2S] cluster binding site. Residue Glu443 participates in Mg(2+) binding. The active-site Proton acceptor is Ser469.

Belongs to the IlvD/Edd family. In terms of assembly, homodimer. It depends on [2Fe-2S] cluster as a cofactor. The cofactor is Mg(2+).

It catalyses the reaction (2R)-2,3-dihydroxy-3-methylbutanoate = 3-methyl-2-oxobutanoate + H2O. It carries out the reaction (2R,3R)-2,3-dihydroxy-3-methylpentanoate = (S)-3-methyl-2-oxopentanoate + H2O. It functions in the pathway amino-acid biosynthesis; L-isoleucine biosynthesis; L-isoleucine from 2-oxobutanoate: step 3/4. The protein operates within amino-acid biosynthesis; L-valine biosynthesis; L-valine from pyruvate: step 3/4. Functionally, functions in the biosynthesis of branched-chain amino acids. Catalyzes the dehydration of (2R,3R)-2,3-dihydroxy-3-methylpentanoate (2,3-dihydroxy-3-methylvalerate) into 2-oxo-3-methylpentanoate (2-oxo-3-methylvalerate) and of (2R)-2,3-dihydroxy-3-methylbutanoate (2,3-dihydroxyisovalerate) into 2-oxo-3-methylbutanoate (2-oxoisovalerate), the penultimate precursor to L-isoleucine and L-valine, respectively. This is Dihydroxy-acid dehydratase from Solidesulfovibrio magneticus (strain ATCC 700980 / DSM 13731 / RS-1) (Desulfovibrio magneticus).